The primary structure comprises 89 residues: Large ribosomal subunit protein bL27 (89 aa).

Residues 1-21 (MAHKKGASSSRNGRDSNAQRL) form a disordered region. A compositionally biased stretch (polar residues) spans 7–19 (ASSSRNGRDSNAQ).

This sequence belongs to the bacterial ribosomal protein bL27 family.

This is Large ribosomal subunit protein bL27 from Frankia alni (strain DSM 45986 / CECT 9034 / ACN14a).